The sequence spans 591 residues: Dihydroxyacetone kinase 2 (591 aa).

Positions 8–344 (SDGNIVTPYL…FDYPTTASGW (337 aa)) constitute a DhaK domain. The tract at residues 40–59 (ASAPNSGNPPKVSLVSGGGS) is disordered. Substrate is bound by residues 58–61 (GSGH), Lys109, and Asp114. Catalysis depends on His223, which acts as the Tele-hemiaminal-histidine intermediate. One can recognise a DhaL domain in the interval 384-587 (DTFAKILLAG…LAALLDGFVT (204 aa)). Residues 413–416 (DGDC), 459–460 (TS), 511–512 (TL), and 572–574 (DPG) contribute to the ATP site.

The protein belongs to the dihydroxyacetone kinase (DAK) family.

It carries out the reaction dihydroxyacetone + ATP = dihydroxyacetone phosphate + ADP + H(+). The enzyme catalyses D-glyceraldehyde + ATP = D-glyceraldehyde 3-phosphate + ADP + H(+). Its pathway is polyol metabolism; glycerol fermentation; glycerone phosphate from glycerol (oxidative route): step 2/2. Functionally, catalyzes both the phosphorylation of dihydroxyacetone and of glyceraldehyde. The chain is Dihydroxyacetone kinase 2 (DAK2) from Saccharomyces cerevisiae (strain ATCC 204508 / S288c) (Baker's yeast).